Consider the following 712-residue polypeptide: Diacylglycerol kinase 2 (712 aa).

2 Phorbol-ester/DAG-type zinc fingers span residues 72 to 133 (HHQW…AKDC) and 145 to 208 (RHHW…GDAC). The 142-residue stretch at 338–479 (PDARPLLVFI…RWSVKIVEES (142 aa)) folds into the DAGKc domain.

Belongs to the eukaryotic diacylglycerol kinase family. As to quaternary structure, monomer. Expressed in rosette and cauline leaves, flowers, siliques and roots. Highly expressed in young leaves and at lower levels in older leaves. In young seedlings, expressed at the root-shoot junction zone and vascular bundles of the cotyledons. In older plants, expressed in root tip, central cylinder, root hair, leaf mesophyll cells and guard cells, sepals, filaments of the anthers, stigma, valves of young and early adult siliques and hilum of seeds.

The protein resides in the endoplasmic reticulum. It carries out the reaction a 1,2-diacyl-sn-glycerol + ATP = a 1,2-diacyl-sn-glycero-3-phosphate + ADP + H(+). It catalyses the reaction 1-octadecanoyl-2-(5Z,8Z,11Z,14Z-eicosatetraenoyl)-sn-glycerol + ATP = 1-octadecanoyl-2-(5Z,8Z,11Z,14Z-eicosatetraenoyl)-sn-glycero-3-phosphate + ADP + H(+). The catalysed reaction is 1,2-di-(9Z-octadecenoyl)-sn-glycerol + ATP = 1,2-di-(9Z-octadecenoyl)-sn-glycero-3-phosphate + ADP + H(+). Its function is as follows. Phosphorylates the second messenger diacylglycerol (DAG) to generate phosphatidic acid (PA), another important signaling molecule. PA is required for plant development and responses to abiotic stress and pathogen attack. May be involved in the accumulation of PA during cold stress. Involved in response to freezing stress by modulating the accumulation of PA. Exhibits high specificity for the unsaturated DAG analogs 1-stearoyl-2-arachidonoyl-sn-glycerol (1,2-SAG) and 1,2-dioleoyl-sn-glycerol (1,2-DOG). Exhibits high specificity for 1-palmitoyl, 2-oleoyl-sn-glycerol (1,2 POG), 1-stearoyl, 2-linoleoyl-sn-glycerol (1,2-SLG) and 1-oleoyl, 2-palmitoyl-sn-glycerol (1,2-OPG). Has almost no activity toward 1,2-dioctanoyl-sn-glycerol (1,2-DOCG), 1,2-dipalmitoyl-sn-glycerol (1,2-DPG), 1,2-dimyristoyl-sn-glycerol (1,2-DMG) and 1-oleoyl-2-acetyl-sn-glycerol (1,2-OAG). Functions together with DGK4 in male gametophyte development and biosynthesis of phosphatidylglycerol and phosphatidylinositol in the endoplasmic reticulum (ER). Involved in PA production for pollen grain growth, as well as leaf and root growth. This chain is Diacylglycerol kinase 2, found in Arabidopsis thaliana (Mouse-ear cress).